Reading from the N-terminus, the 186-residue chain is LIM domain-containing protein DDB_G0271356 (186 aa).

LIM zinc-binding domains are found at residues 7–67, 68–127, and 128–186; these read PECY…DKFA, PKCQ…KIGF, and LCRH…KLYG.

The chain is LIM domain-containing protein DDB_G0271356 from Dictyostelium discoideum (Social amoeba).